Consider the following 436-residue polypeptide: Exodeoxyribonuclease 7 large subunit (436 aa).

The disordered stretch occupies residues proline 412–alanine 436. Over residues asparagine 417–alanine 436 the composition is skewed to low complexity.

The protein belongs to the XseA family. As to quaternary structure, heterooligomer composed of large and small subunits.

It is found in the cytoplasm. It catalyses the reaction Exonucleolytic cleavage in either 5'- to 3'- or 3'- to 5'-direction to yield nucleoside 5'-phosphates.. Functionally, bidirectionally degrades single-stranded DNA into large acid-insoluble oligonucleotides, which are then degraded further into small acid-soluble oligonucleotides. The chain is Exodeoxyribonuclease 7 large subunit from Corynebacterium jeikeium (strain K411).